Reading from the N-terminus, the 211-residue chain is Thymidylate kinase (211 aa).

11–18 serves as a coordination point for ATP; the sequence is GPDGAGKT.

It belongs to the thymidylate kinase family.

It carries out the reaction dTMP + ATP = dTDP + ADP. Functionally, phosphorylation of dTMP to form dTDP in both de novo and salvage pathways of dTTP synthesis. In Streptococcus equi subsp. equi (strain 4047), this protein is Thymidylate kinase.